The chain runs to 356 residues: Photosystem II protein D1 (356 aa).

The next 3 helical transmembrane spans lie at 29–46 (YVGW…TATT), 118–133 (HFLI…QWEL), and 142–156 (WICV…AATA). His-118 is a binding site for chlorophyll a. Tyr-126 provides a ligand contact to pheophytin a. [CaMn4O5] cluster-binding residues include Asp-170 and Glu-189. Residues 197–218 (FHMLGVAGVFGGSLFSAMHGSL) form a helical membrane-spanning segment. His-198 is a binding site for chlorophyll a. Residues His-215 and 264 to 265 (SF) contribute to the a quinone site. Residue His-215 participates in Fe cation binding. His-272 contacts Fe cation. Residues 274 to 288 (FLGAWPVIGIWFTAM) traverse the membrane as a helical segment. [CaMn4O5] cluster contacts are provided by His-332, Glu-333, Asp-342, and Ala-344. Residues 345-356 (SAEPVSAPVING) constitute a propeptide that is removed on maturation.

The protein belongs to the reaction center PufL/M/PsbA/D family. As to quaternary structure, PSII is composed of 1 copy each of membrane proteins PsbA, PsbB, PsbC, PsbD, PsbE, PsbF, PsbH, PsbI, PsbJ, PsbK, PsbL, PsbM, PsbT, PsbX, PsbY, PsbZ, Psb30/Ycf12, peripheral proteins PsbO, CyanoQ (PsbQ), PsbU, PsbV and a large number of cofactors. It forms dimeric complexes. The D1/D2 heterodimer binds P680, chlorophylls that are the primary electron donor of PSII, and subsequent electron acceptors. It shares a non-heme iron and each subunit binds pheophytin, quinone, additional chlorophylls, carotenoids and lipids. D1 provides most of the ligands for the Mn4-Ca-O5 cluster of the oxygen-evolving complex (OEC). There is also a Cl(-1) ion associated with D1 and D2, which is required for oxygen evolution. The PSII complex binds additional chlorophylls, carotenoids and specific lipids. serves as cofactor. In terms of processing, tyr-161 forms a radical intermediate that is referred to as redox-active TyrZ, YZ or Y-Z. Post-translationally, C-terminally processed by CtpA; processing is essential to allow assembly of the oxygen-evolving complex and thus photosynthetic growth.

It is found in the cellular thylakoid membrane. It catalyses the reaction 2 a plastoquinone + 4 hnu + 2 H2O = 2 a plastoquinol + O2. Functionally, photosystem II (PSII) is a light-driven water:plastoquinone oxidoreductase that uses light energy to abstract electrons from H(2)O, generating O(2) and a proton gradient subsequently used for ATP formation. It consists of a core antenna complex that captures photons, and an electron transfer chain that converts photonic excitation into a charge separation. The D1/D2 (PsbA/PsbD) reaction center heterodimer binds P680, the primary electron donor of PSII as well as several subsequent electron acceptors. This is Photosystem II protein D1 from Crocosphaera subtropica (strain ATCC 51142 / BH68) (Cyanothece sp. (strain ATCC 51142)).